The primary structure comprises 359 residues: CMP-N-acetylneuraminate-poly-alpha-2,8-sialyltransferase (359 aa).

Topologically, residues 1 to 7 (MRSIRKR) are cytoplasmic. The helical; Signal-anchor for type II membrane protein transmembrane segment at 8–20 (WTICTISLLLIFY) threads the bilayer. The Lumenal segment spans residues 21–359 (KTKEIARTEE…KLTTGKCMKQ (339 aa)). Residues Asn50, Asn74, and Asn119 are each glycosylated (N-linked (GlcNAc...) asparagine). Cystine bridges form between Cys142-Cys292 and Cys156-Cys356. CMP-N-acetyl-beta-neuraminate-binding residues include Asn147 and Asn170. 2 N-linked (GlcNAc...) asparagine glycosylation sites follow: Asn204 and Asn219. CMP-N-acetyl-beta-neuraminate contacts are provided by Ser279, Thr280, Gly281, and Trp301. The active-site Proton donor/acceptor is His331.

It belongs to the glycosyltransferase 29 family. In terms of processing, autopolysialylated.

Its subcellular location is the golgi apparatus membrane. The protein localises to the secreted. The enzyme catalyses [N-acetyl-alpha-D-neuraminosyl-(2-&gt;8)](n) + CMP-N-acetyl-beta-neuraminate = [N-acetyl-alpha-D-neuraminosyl-(2-&gt;8)](n+1) + CMP + H(+). It functions in the pathway protein modification; protein glycosylation. In terms of biological role, catalyzes the transfer of a sialic acid from a CMP-linked sialic acid donor onto a terminal alpha-2,3-, alpha-2,6-, or alpha-2,8-linked sialic acid of an N-linked glycan protein acceptor through alpha-2,8-linkages. Therefore, participates in polysialic acid synthesis on various sialylated N-acetyllactosaminyl oligosaccharides, including NCAM1 N-glycans, FETUB N-glycans and AHSG. It is noteworthy that alpha-2,3-linked sialic acid is apparently a better acceptor than alpha-2,6-linked sialic acid. The chain is CMP-N-acetylneuraminate-poly-alpha-2,8-sialyltransferase from Cricetulus griseus (Chinese hamster).